The sequence spans 199 residues: uncharacterized protein (199 aa).

Helical transmembrane passes span 41–61, 72–92, 109–129, and 145–165; these read LFIPPSACRIDLSVFPWAFIC, SLICSPCFSTVWVSLLICSPW, TVWVNLLICSPWAAKVVSIFV, and VTYSVFTGITGLLSLNCLLNL.

To M.pneumoniae MPN_037.

The protein resides in the cell membrane. This is an uncharacterized protein from Mycoplasma pneumoniae (strain ATCC 29342 / M129 / Subtype 1) (Mycoplasmoides pneumoniae).